A 96-amino-acid polypeptide reads, in one-letter code: Protein Vpr (96 aa).

Residues 1-42 (MEQAPEDQGPQREPYNQWALELLEELKNEAVRHFPRIWLHGL) are homooligomerization. Residues Ser-79, Ser-94, and Ser-96 each carry the phosphoserine; by host modification.

This sequence belongs to the HIV-1 VPR protein family. As to quaternary structure, homooligomer, may form homodimer. Interacts with p6-gag region of the Pr55 Gag precursor protein through a (Leu-X-X)4 motif near the C-terminus of the P6gag protein. Interacts with host UNG. May interact with host RAD23A/HHR23A. Interacts with host VPRBP/DCAF1, leading to hijack the CUL4A-RBX1-DDB1-DCAF1/VPRBP complex, mediating ubiquitination of host proteins such as TERT and ZGPAT and arrest of the cell cycle in G2 phase. Post-translationally, phosphorylated on several residues by host. These phosphorylations regulate VPR activity for the nuclear import of the HIV-1 pre-integration complex.

Its subcellular location is the virion. It localises to the host nucleus. The protein resides in the host extracellular space. In terms of biological role, during virus replication, may deplete host UNG protein, and incude G2-M cell cycle arrest. Acts by targeting specific host proteins for degradation by the 26S proteasome, through association with the cellular CUL4A-DDB1 E3 ligase complex by direct interaction with host VPRPB/DCAF-1. Cell cycle arrest reportedly occurs within hours of infection and is not blocked by antiviral agents, suggesting that it is initiated by the VPR carried into the virion. Additionally, VPR induces apoptosis in a cell cycle dependent manner suggesting that these two effects are mechanistically linked. Detected in the serum and cerebrospinal fluid of AIDS patient, VPR may also induce cell death to bystander cells. Functionally, during virus entry, plays a role in the transport of the viral pre-integration (PIC) complex to the host nucleus. This function is crucial for viral infection of non-dividing macrophages. May act directly at the nuclear pore complex, by binding nucleoporins phenylalanine-glycine (FG)-repeat regions. In Human immunodeficiency virus type 1 group M subtype B (isolate MN) (HIV-1), this protein is Protein Vpr.